A 204-amino-acid polypeptide reads, in one-letter code: uncharacterized protein (204 aa).

The protein resides in the mitochondrion. This is an uncharacterized protein from Arabidopsis thaliana (Mouse-ear cress).